The sequence spans 375 residues: Cytochrome P450 monooxygenase ACRTS1 (375 aa).

Position 321 (cysteine 321) interacts with heme.

Belongs to the cytochrome P450 family. Heme is required as a cofactor.

It participates in mycotoxin biosynthesis. Functionally, cytochrome P450 monooxygenase; part of the gene cluster that mediates the biosynthesis of the host-selective toxins (HSTs) ACR-toxins responsible for brown spot of rough lemon disease by the rough lemon pathotype. ACR-toxins cause uncoupling of mitochondrial oxidative-phosphorylation similar to that of classic protonophore. The structure of the major form of ACR-toxin (ACR-toxin I) consists of an alpha-dihydropyrone ring in a 19-carbon polyalcohol, a typical polyketide structure. Minor toxins were characterized as having a pyrone ring with polyalcohol side chains different in length and showing weaker toxicity. The highly reducing polyketide synthase ACRTS2 has all necessary enzymatic domains for multiple cycles of condensation and beta-keto processing. The cytochrome P450 monooxygenase ACRTS1 has also been shown to be essential for ACR-toxin biosynthesis, however its exact role in the pathway has not been elucidated yet. The chain is Cytochrome P450 monooxygenase ACRTS1 from Alternaria alternata (Alternaria rot fungus).